The primary structure comprises 200 residues: UPF0316 protein SAUSA300_1892 (200 aa).

3 consecutive transmembrane segments (helical) span residues 8 to 28, 40 to 60, and 66 to 86; these read PWLMVLTIFIINICYVTFLTM, IAASVSFLEVLVYIVGLGLVM, and IQNIIAYAFGFSIGIIVGMKI.

It belongs to the UPF0316 family.

It localises to the cell membrane. In Staphylococcus aureus (strain USA300), this protein is UPF0316 protein SAUSA300_1892.